Here is a 376-residue protein sequence, read N- to C-terminus: Chaperone protein DnaJ (376 aa).

The 66-residue stretch at 5–70 folds into the J domain; sequence DYYEILGVER…QKRAAYDKFG (66 aa). A CR-type zinc finger spans residues 131 to 209; sequence GVSKEIKVPT…CHGDGRVQKT (79 aa). Zn(2+) contacts are provided by Cys-144, Cys-147, Cys-161, Cys-164, Cys-183, Cys-186, Cys-197, and Cys-200. CXXCXGXG motif repeat units follow at residues 144-151, 161-168, 183-190, and 197-204; these read CDECHGSG, CPTCHGSG, CPHCHGKG, and CRKCHGDG.

This sequence belongs to the DnaJ family. In terms of assembly, homodimer. Zn(2+) is required as a cofactor.

It is found in the cytoplasm. Participates actively in the response to hyperosmotic and heat shock by preventing the aggregation of stress-denatured proteins and by disaggregating proteins, also in an autonomous, DnaK-independent fashion. Unfolded proteins bind initially to DnaJ; upon interaction with the DnaJ-bound protein, DnaK hydrolyzes its bound ATP, resulting in the formation of a stable complex. GrpE releases ADP from DnaK; ATP binding to DnaK triggers the release of the substrate protein, thus completing the reaction cycle. Several rounds of ATP-dependent interactions between DnaJ, DnaK and GrpE are required for fully efficient folding. Also involved, together with DnaK and GrpE, in the DNA replication of plasmids through activation of initiation proteins. The protein is Chaperone protein DnaJ of Tolumonas auensis (strain DSM 9187 / NBRC 110442 / TA 4).